Reading from the N-terminus, the 167-residue chain is Probable glutathione peroxidase 8 (167 aa).

Residue cysteine 41 is part of the active site.

This sequence belongs to the glutathione peroxidase family.

It carries out the reaction 2 glutathione + H2O2 = glutathione disulfide + 2 H2O. In terms of biological role, may constitute a glutathione peroxidase-like protective system against oxidative stresses. This is Probable glutathione peroxidase 8 (GPX8) from Arabidopsis thaliana (Mouse-ear cress).